A 665-amino-acid chain; its full sequence is Cyclic nucleotide-gated cation channel subunit A (665 aa).

Residues 1–110 (MRHFKVKAMV…DPTLQSHYRW (110 aa)) lie on the Cytoplasmic side of the membrane. Residues 111-131 (LAIVSLAVLYNIIFVVGRAVF) traverse the membrane as a helical segment. The Extracellular segment spans residues 132-138 (WEINKSA). An N-linked (GlcNAc...) asparagine glycan is attached at Asn135. The chain crosses the membrane as a helical span at residues 139-159 (PAFWYTLDYLCDFIYLLDTLV). Over 160-186 (HMHEGFLDQGLLVRDAFRLRRHYFHTK) the chain is Cytoplasmic. The chain crosses the membrane as a helical span at residues 187 to 207 (GWYLDVLSMLPTDLAYIWWPP). Residues 208-253 (ETCSSLYLPCPVIVRLNRLLRINRLWEWFDRTETATGYPNAFRICK) are Extracellular-facing. Residues 254–274 (VVLAILVLIHWNACMYFAISY) form a helical membrane-spanning segment. The Cytoplasmic segment spans residues 275 to 325 (EIGFSSDSWVYNLNGTRNNTLQRQYIYSFYWSTLTLTTIGETPTPENDVEY). The helical transmembrane segment at 326-346 (LFVVADFLAGVLIFATIVGNI) threads the bilayer. At 347-481 (GSMISNMNVA…GKLSVVGDDG (135 aa)) the chain is on the extracellular side. 3',5'-cyclic GMP contacts are provided by residues 437 to 559 (LLEA…DGLL), Glu496, and Arg511. Residues 482–502 (ITVLATLGAGSVFGEVSVLEI) form a helical membrane-spanning segment. Topologically, residues 503–665 (AGNRTGNRRT…SSDAAKQNTL (163 aa)) are cytoplasmic. A disordered region spans residues 633–665 (RSGRLYSLQPKRRPRSRPDATAKSSDAAKQNTL). Positions 654–665 (AKSSDAAKQNTL) are enriched in polar residues.

This sequence belongs to the cyclic nucleotide-gated cation channel (TC 1.A.1.5) family. As to expression, expressed in antennae and the visual system.

It is found in the membrane. Its function is as follows. Approximately 50-fold more sensitive to cGMP than to cAMP. May be involved in transduction cascades of both invertebrate photoreceptors and olfactory sensillae. This is Cyclic nucleotide-gated cation channel subunit A (CngA) from Drosophila melanogaster (Fruit fly).